Consider the following 143-residue polypeptide: Large ribosomal subunit protein uL11 (143 aa).

Belongs to the universal ribosomal protein uL11 family. In terms of assembly, part of the ribosomal stalk of the 50S ribosomal subunit. Interacts with L10 and the large rRNA to form the base of the stalk. L10 forms an elongated spine to which L12 dimers bind in a sequential fashion forming a multimeric L10(L12)X complex. Post-translationally, one or more lysine residues are methylated.

Forms part of the ribosomal stalk which helps the ribosome interact with GTP-bound translation factors. The polypeptide is Large ribosomal subunit protein uL11 (Polynucleobacter necessarius subsp. necessarius (strain STIR1)).